Here is a 225-residue protein sequence, read N- to C-terminus: MAAAGGGGGGAAAAGRAYSFKVVLLGEGCVGKTSLVLRYCENKFNDKHITTLQASFLTKKLNIGGKRVNLAIWDTAGQERFHALGPIYYRDSNGAILVYDITDEDSFQKVKNWVKELRKMLGNEICLCIVGNKIDLEKERHVSIQEAESYAESVGAKHYHTSAKQNKGIEELFLDLCKRMIETAQVDERAKGNGSSQPGTARRGVQIIDDEPQAQTSGGGCCSSG.

A2 bears the N-acetylalanine mark. G28, G31, K32, T33, S34, N45, D46, H48, T50, and T51 together coordinate GTP. A Mg(2+)-binding site is contributed by T33. A Switch 1 motif is present at residues 43–56; that stretch reads KFNDKHITTLQASF. Mg(2+)-binding residues include T51 and D74. A Switch 2 motif is present at residues 76-94; sequence AGQERFHALGPIYYRDSNG. G77, N132, K133, D135, A163, and K164 together coordinate GTP. The disordered stretch occupies residues 188 to 225; it reads ERAKGNGSSQPGTARRGVQIIDDEPQAQTSGGGCCSSG. Residues C221 and C222 are each lipidated (S-geranylgeranyl cysteine). C222 is modified (cysteine methyl ester). Residues 223–225 constitute a propeptide, removed in mature form; it reads SSG.

It belongs to the small GTPase superfamily. Rab family. As to quaternary structure, interacts with the cytoplasmic tail of integrins ITGA1, ITGA2, ITGA5, ITGA6, ITGA11 and ITGB1. Interacts with RABGEF1 (via VPS9 domain). Interacts with ANKRD27. Interacts with VAMP7. Interacts (in GTP-bound form) with VAMP8 in response to starvation; the interaction probably regulates VAMP8 endolysosomal trafficking. Interacts (active GTP-bound form) with TMED10; the interaction is indirect and regulates TMED10 abundance and localization at the Golgi. The cofactor is Mg(2+). In terms of tissue distribution, widely expressed. In jejunal tissue, predominantly expressed in the apical region of the epithelial cell layer of the villi, weak expression, if any, in the crypt epithelium. Capillary endothelium and some cell types in the lamina propria also show expression.

It is found in the endoplasmic reticulum membrane. It localises to the golgi apparatus. Its subcellular location is the trans-Golgi network. The protein resides in the golgi apparatus membrane. The protein localises to the early endosome membrane. It is found in the cytoplasmic vesicle membrane. It localises to the cleavage furrow. Its subcellular location is the cell projection. The protein resides in the neuron projection. It catalyses the reaction GTP + H2O = GDP + phosphate + H(+). Regulated by guanine nucleotide exchange factors (GEFs) including ANKRD27 and RABGEF1, which promote the exchange of bound GDP for free GTP. Regulated by GTPase activating proteins (GAPs) which increase the GTP hydrolysis activity. Inhibited by GDP dissociation inhibitors (GDIs). Functionally, the small GTPases Rab are key regulators of intracellular membrane trafficking, from the formation of transport vesicles to their fusion with membranes. Rabs cycle between an inactive GDP-bound form and an active GTP-bound form that is able to recruit to membranes different sets of downstream effectors directly responsible for vesicle formation, movement, tethering and fusion. RAB21 is involved in membrane trafficking control. During the mitosis of adherent cells, controls the endosomal trafficking of integrins which is required for the successful completion of cytokinesis. Regulates integrin internalization and recycling, but does not influence the traffic of endosomally translocated receptors in general. As a result, may regulate cell adhesion and migration. Involved in neurite growth. Following SBF2/MTMT13-mediated activation in response to starvation-induced autophagy, binds to and regulates SNARE protein VAMP8 endolysosomal transport required for SNARE-mediated autophagosome-lysosome fusion. Modulates protein levels of the cargo receptors TMED2 and TMED10, and required for appropriate Golgi localization of TMED10. The polypeptide is Ras-related protein Rab-21 (Homo sapiens (Human)).